Reading from the N-terminus, the 454-residue chain is uncharacterized protein (454 aa).

An N-terminal signal peptide occupies residues 1 to 21 (MKYKTVKSIPLFLLGSIVFTA). C22 carries the N-palmitoyl cysteine lipid modification. Residue C22 is the site of S-diacylglycerol cysteine attachment. The segment covering 55–64 (ASSSSSTTTS) has biased composition (low complexity). Positions 55-87 (ASSSSSTTTSNDDNNQKGYFLETNRSTGTYDPN) are disordered. A compositionally biased stretch (polar residues) spans 65–87 (NDDNNQKGYFLETNRSTGTYDPN).

It localises to the cell membrane. This is an uncharacterized protein from Mycoplasma pneumoniae (strain ATCC 29342 / M129 / Subtype 1) (Mycoplasmoides pneumoniae).